A 155-amino-acid polypeptide reads, in one-letter code: Endoribonuclease YbeY (155 aa).

3 residues coordinate Zn(2+): His-114, His-118, and His-124.

Belongs to the endoribonuclease YbeY family. Requires Zn(2+) as cofactor.

It is found in the cytoplasm. Functionally, single strand-specific metallo-endoribonuclease involved in late-stage 70S ribosome quality control and in maturation of the 3' terminus of the 16S rRNA. The polypeptide is Endoribonuclease YbeY (Proteus mirabilis (strain HI4320)).